The following is a 581-amino-acid chain: Arginine--tRNA ligase (581 aa).

Positions 131 to 141 (ANPTGPMHVGH) match the 'HIGH' region motif.

The protein belongs to the class-I aminoacyl-tRNA synthetase family. As to quaternary structure, monomer.

The protein resides in the cytoplasm. The enzyme catalyses tRNA(Arg) + L-arginine + ATP = L-arginyl-tRNA(Arg) + AMP + diphosphate. The polypeptide is Arginine--tRNA ligase (Paracoccus denitrificans (strain Pd 1222)).